The chain runs to 148 residues: F420H(2)-dependent quinone reductase MT1609 (148 aa).

Coenzyme F420-(gamma-Glu)n-binding positions include 46-48 (AKT), 52-57 (RKTPLM), 68-71 (VASL), 79-83 (VWYHN), and Y125.

It belongs to the F420H(2)-dependent quinone reductase family.

The protein resides in the cell membrane. It carries out the reaction oxidized coenzyme F420-(gamma-L-Glu)(n) + a quinol + H(+) = reduced coenzyme F420-(gamma-L-Glu)(n) + a quinone. Its function is as follows. Involved in a F420-dependent anti-oxidant mechanism that protects M.tuberculosis against oxidative stress and bactericidal agents. Catalyzes the F420H(2)-dependent two-electron reduction of quinones to dihydroquinones, thereby preventing the formation of cytotoxic semiquinones obtained by the one-electron reduction pathway. In vitro, catalyzes the reduction of menadione to menadiol; since menaquinone is the sole quinone electron carrier in the respiratory chain in M.tuberculosis, the physiological electron acceptor for Fqr-mediated F420H(2) oxidation is therefore likely to be the endogenous menaquinone found in the membrane fraction of M.tuberculosis. In Mycobacterium tuberculosis (strain CDC 1551 / Oshkosh), this protein is F420H(2)-dependent quinone reductase MT1609.